The sequence spans 350 residues: Homoserine O-succinyltransferase (350 aa).

Cysteine 146 (acyl-thioester intermediate) is an active-site residue. 2 residues coordinate substrate: lysine 167 and serine 196. Histidine 239 (proton acceptor) is an active-site residue. Residue glutamate 241 is part of the active site. Arginine 253 is a binding site for substrate.

Belongs to the MetA family.

It is found in the cytoplasm. The catalysed reaction is L-homoserine + succinyl-CoA = O-succinyl-L-homoserine + CoA. It functions in the pathway amino-acid biosynthesis; L-methionine biosynthesis via de novo pathway; O-succinyl-L-homoserine from L-homoserine: step 1/1. Its function is as follows. Transfers a succinyl group from succinyl-CoA to L-homoserine, forming succinyl-L-homoserine. The sequence is that of Homoserine O-succinyltransferase from Cardiobacterium hominis (strain ATCC 15826 / DSM 8339 / NCTC 10426 / 6573).